Reading from the N-terminus, the 431-residue chain is Histidine--tRNA ligase (431 aa).

The interval 1–20 is disordered; the sequence is MALQRPKGTQDHLPDGSPKL.

It belongs to the class-II aminoacyl-tRNA synthetase family. As to quaternary structure, homodimer.

It is found in the cytoplasm. The catalysed reaction is tRNA(His) + L-histidine + ATP = L-histidyl-tRNA(His) + AMP + diphosphate + H(+). This chain is Histidine--tRNA ligase, found in Deinococcus geothermalis (strain DSM 11300 / CIP 105573 / AG-3a).